The sequence spans 132 residues: Small ribosomal subunit protein uS9 (132 aa).

The protein belongs to the universal ribosomal protein uS9 family.

This is Small ribosomal subunit protein uS9 (rps9) from Thermoplasma volcanium (strain ATCC 51530 / DSM 4299 / JCM 9571 / NBRC 15438 / GSS1).